A 400-amino-acid polypeptide reads, in one-letter code: S-adenosylmethionine sensor upstream of mTORC1 (400 aa).

Residues arginine 99, glycine 168, aspartate 186, aspartate 198, phenylalanine 199, and serine 240 each contribute to the S-adenosyl-L-methionine site.

It belongs to the BMT2/SAMTOR family. In terms of assembly, interacts with the GATOR1 complex; interaction is disrupted when samtor binds S-adenosyl-L-methionine. Interacts with the KICSTOR complex; interaction is disrupted when samtor binds S-adenosyl-L-methionine.

S-adenosyl-L-methionine-binding protein that acts as an inhibitor of mTORC1 signaling via interaction with the GATOR1 and KICSTOR complexes. Acts as a sensor of S-adenosyl-L-methionine to signal methionine sufficiency to mTORC1: in presence of methionine, binds S-adenosyl-L-methionine, leading to disrupt interaction with the GATOR1 and KICSTOR complexes and promote mTORC1 signaling. Upon methionine starvation, S-adenosyl-L-methionine levels are reduced, thereby promoting the association with GATOR1 and KICSTOR, leading to inhibit mTORC1 signaling. Probably also acts as a S-adenosyl-L-methionine-dependent methyltransferase. This chain is S-adenosylmethionine sensor upstream of mTORC1, found in Xenopus laevis (African clawed frog).